The sequence spans 260 residues: MSKRPGDIIISTPVSKVRRRLNFDSPYSSRAAVPIVQGTNKRRSWTYRPMYRKPRIYRMYRSPDVPRGCEGPCKVQSYEQRDDIKHTGIVRCVSDVTRGSGITHRVGKRFCVKSIYFLGKVWMDENIKKQNHTNQVMFFLVRDRRPYGNSPMDFGQVFNMFDNEPSTATVKNDLRDRFQVMRKFHATVIGGPSGMKEQALVKRFFKINSHVTLFIFIQEAAKYENHTENALLLYMACTHASNPVYATMKIRIYFYDSISN.

The short motif at K3–R20 is the Bipartite nuclear localization signal element. The Nuclear localization signal signature appears at K41–R55. A zinc finger spans residues C69–H86. Residues I102–M123 carry the Nuclear export signal motif. The short motif at K202 to R251 is the Bipartite nuclear localization signal element.

The protein belongs to the geminiviridae capsid protein family. Homomultimer. Binds to single-stranded and double-stranded viral DNA. Interacts (via nuclear localization signals) with host importin alpha-1a.

The protein localises to the virion. It is found in the host nucleus. Its function is as follows. Encapsidates the viral genome into characteristic twinned ('geminate') particles. Binds the genomic viral ssDNA and shuttles it into and out of the cell nucleus. Plays a role in protection of the genome from degradation, virus acquisition and transmission by insect vectors, infectivity, and systemic movement. The CP of monopartite geminiviruses is absolutely essential for virus movement. In Cynanchum acutum (Little mallow), this protein is Capsid protein.